The sequence spans 278 residues: Leucine-rich repeat-containing protein 10 (278 aa).

LRR repeat units lie at residues 30–51, 52–74, 76–97, 98–121, 123–143, 144–166, 167–189, and 191–213; these read LDRM…VCSF, QELV…LGQL, NLQI…VCTL, KQLC…SLLQ, LRTL…VCEL, SLLK…LQRL, RELR…LLHM, and FLEI…HLSS. Residues 239 to 250 show a composition bias toward basic and acidic residues; that stretch reads RWAEETPEPDPR. The disordered stretch occupies residues 239–278; the sequence is RWAEETPEPDPRKARRYALAREESQEAQLPALPPLPPTNS. Over residues 269-278 the composition is skewed to pro residues; the sequence is ALPPLPPTNS.

It localises to the nucleus. May play important roles in cardiac development and/or cardiac function. In Bos taurus (Bovine), this protein is Leucine-rich repeat-containing protein 10 (LRRC10).